We begin with the raw amino-acid sequence, 491 residues long: Aspartyl/glutamyl-tRNA(Asn/Gln) amidotransferase subunit B (491 aa).

The protein belongs to the GatB/GatE family. GatB subfamily. In terms of assembly, heterotrimer of A, B and C subunits.

It catalyses the reaction L-glutamyl-tRNA(Gln) + L-glutamine + ATP + H2O = L-glutaminyl-tRNA(Gln) + L-glutamate + ADP + phosphate + H(+). It carries out the reaction L-aspartyl-tRNA(Asn) + L-glutamine + ATP + H2O = L-asparaginyl-tRNA(Asn) + L-glutamate + ADP + phosphate + 2 H(+). In terms of biological role, allows the formation of correctly charged Asn-tRNA(Asn) or Gln-tRNA(Gln) through the transamidation of misacylated Asp-tRNA(Asn) or Glu-tRNA(Gln) in organisms which lack either or both of asparaginyl-tRNA or glutaminyl-tRNA synthetases. The reaction takes place in the presence of glutamine and ATP through an activated phospho-Asp-tRNA(Asn) or phospho-Glu-tRNA(Gln). The polypeptide is Aspartyl/glutamyl-tRNA(Asn/Gln) amidotransferase subunit B (Paraburkholderia xenovorans (strain LB400)).